The primary structure comprises 186 residues: Ribosome-recycling factor (186 aa).

Belongs to the RRF family.

The protein resides in the cytoplasm. Its function is as follows. Responsible for the release of ribosomes from messenger RNA at the termination of protein biosynthesis. May increase the efficiency of translation by recycling ribosomes from one round of translation to another. This is Ribosome-recycling factor from Coprothermobacter proteolyticus (strain ATCC 35245 / DSM 5265 / OCM 4 / BT).